Here is a 307-residue protein sequence, read N- to C-terminus: 4-hydroxy-3-methylbut-2-enyl diphosphate reductase (307 aa).

Position 13 (C13) interacts with [4Fe-4S] cluster. The (2E)-4-hydroxy-3-methylbut-2-enyl diphosphate site is built by H42 and H75. Residues H42 and H75 each coordinate dimethylallyl diphosphate. Positions 42 and 75 each coordinate isopentenyl diphosphate. Residue C97 participates in [4Fe-4S] cluster binding. A (2E)-4-hydroxy-3-methylbut-2-enyl diphosphate-binding site is contributed by H125. H125 provides a ligand contact to dimethylallyl diphosphate. H125 contacts isopentenyl diphosphate. E127 (proton donor) is an active-site residue. T165 contacts (2E)-4-hydroxy-3-methylbut-2-enyl diphosphate. Position 195 (C195) interacts with [4Fe-4S] cluster. S223, S224, N225, and S267 together coordinate (2E)-4-hydroxy-3-methylbut-2-enyl diphosphate. Dimethylallyl diphosphate is bound by residues S223, S224, N225, and S267. Isopentenyl diphosphate-binding residues include S223, S224, N225, and S267.

It belongs to the IspH family. The cofactor is [4Fe-4S] cluster.

The enzyme catalyses isopentenyl diphosphate + 2 oxidized [2Fe-2S]-[ferredoxin] + H2O = (2E)-4-hydroxy-3-methylbut-2-enyl diphosphate + 2 reduced [2Fe-2S]-[ferredoxin] + 2 H(+). The catalysed reaction is dimethylallyl diphosphate + 2 oxidized [2Fe-2S]-[ferredoxin] + H2O = (2E)-4-hydroxy-3-methylbut-2-enyl diphosphate + 2 reduced [2Fe-2S]-[ferredoxin] + 2 H(+). The protein operates within isoprenoid biosynthesis; dimethylallyl diphosphate biosynthesis; dimethylallyl diphosphate from (2E)-4-hydroxy-3-methylbutenyl diphosphate: step 1/1. Its pathway is isoprenoid biosynthesis; isopentenyl diphosphate biosynthesis via DXP pathway; isopentenyl diphosphate from 1-deoxy-D-xylulose 5-phosphate: step 6/6. Its function is as follows. Catalyzes the conversion of 1-hydroxy-2-methyl-2-(E)-butenyl 4-diphosphate (HMBPP) into a mixture of isopentenyl diphosphate (IPP) and dimethylallyl diphosphate (DMAPP). Acts in the terminal step of the DOXP/MEP pathway for isoprenoid precursor biosynthesis. The polypeptide is 4-hydroxy-3-methylbut-2-enyl diphosphate reductase (Chlamydia trachomatis serovar D (strain ATCC VR-885 / DSM 19411 / UW-3/Cx)).